Consider the following 778-residue polypeptide: High affinity nerve growth factor receptor (778 aa).

The N-terminal stretch at 1-14 (WGCLRLPLPLCHAL) is a signal peptide. Residues 15–400 (AAHCRCPASH…VETADEHTFG (386 aa)) lie on the Extracellular side of the membrane. Cysteines 18 and 20 form a disulfide. LRR repeat units lie at residues 71–92 (DLRH…AFQD) and 95–116 (RLSH…TFQH). N-linked (GlcNAc...) asparagine glycans are attached at residues N100, N130, N143, N151, N194, N234, N262, N300, N320, N340, and N384. An LRRCT domain is found at 127–175 (NPFNCSCGIRWLQLWQNGSRAELGNQSLLCWEGSMLVALDSHPLHDCEP). C133 and C173 form a disulfide bridge. Ig-like C2-type domains follow at residues 175–262 (PPTA…VMLN) and 281–347 (WCIP…VVQN). An intrachain disulfide couples C282 to C327. A helical membrane pass occupies residues 401-421 (VSVAVALAVFASLFLSVMLIA). At 422-778 (LNKCGHRSKF…TPPIYLDILG (357 aa)) the chain is on the cytoplasmic side. The residue at position 479 (Y479) is a Phosphotyrosine; by autocatalysis. The Protein kinase domain occupies 493 to 763 (IVLKWELGEG…RSIQDIHSRL (271 aa)). Residues 499–507 (LGEGAFGKV) and K527 contribute to the ATP site. The active-site Proton acceptor is D633. Phosphotyrosine; by autocatalysis occurs at positions 659, 663, 664, and 773.

It belongs to the protein kinase superfamily. Tyr protein kinase family. Insulin receptor subfamily. As to quaternary structure, exists in a dynamic equilibrium between monomeric (low affinity) and dimeric (high affinity) structures. Homodimerization is induced by NGF dimer binding. Interacts with PTPRS. Ligand-mediated auto-phosphorylation. Post-translationally, ubiquitinated. Undergoes polyubiquitination upon activation; regulated by NGFR. Ubiquitination regulates the internalization of the receptor.

The protein resides in the cell membrane. The protein localises to the early endosome membrane. It is found in the late endosome membrane. It localises to the recycling endosome membrane. The catalysed reaction is L-tyrosyl-[protein] + ATP = O-phospho-L-tyrosyl-[protein] + ADP + H(+). The pro-survival signaling effect of NTRK1 in neurons requires its endocytosis into signaling early endosomes and its retrograde axonal transport. Functionally, receptor tyrosine kinase involved in the development and the maturation of the central and peripheral nervous systems through regulation of proliferation, differentiation and survival of sympathetic and nervous neurons. High affinity receptor for NGF which is its primary ligand, it can also bind and be activated by NTF3/neurotrophin-3. Upon dimeric NGF ligand-binding, undergoes homodimerization, autophosphorylation and activation. Recruits, phosphorylates and/or activates several downstream effectors that regulate distinct overlapping signaling cascades driving cell survival and differentiation. In absence of ligand and activation, may promote cell death, making the survival of neurons dependent on trophic factors. The sequence is that of High affinity nerve growth factor receptor (NTRK1) from Gallus gallus (Chicken).